The chain runs to 641 residues: MSVFRDLVEGECSEPNALGNFVQHFTNERSYHDKFEDHGKNEFYDSLYRHEEEYNEQRHLDSIFDGEGQEDDIHLMMDRHLNLRDGPREHKELPLSNVESDLQFLFQDFINSTRAGQLFHPSSLNHLPLTFEDKSKIKNRSSIMLKHFSNGESEQFEEDQLNRMLDSLGIEVGDDFDQVWDSQPHHTTTTTTTTTTTTTGQYDQYQKYVNDLPEEYEDYEQHQQELFDDGDLEDYELDEEWDKGDDFHPYDSAWTESDRSVEAAWDETARRTISDITRPITQINDPKLKKSNFMKFMNQLNSGEASIVGSDVVHNPDFKRQEEYQQQADQWTEDYNDFHEHIPQHRIQEYQFSIQEARDSDTLERGMGLFNEGHLSDSIIALESEVKRNPENAMAWMYLGIAHAENDQDSQATTCLIKSLQIDPTNSKARLALAVSHTNDYQKERALDTLEEWLQRTPEYTALYKQFKGSVDPNSFLDTWSRHEFTTNLFIEAARSRPSNPDPEVQTALGLLYNMSYDYDKAVDCFKAALQNSPTDYQLWNKLGATLANSNRSQEALGAYFKALEHKPSYVRARSNLGISYLSLNMFQESATTFLGAIAIHPAPNIWDNLKMVFRLMNREDLVQKADLRDVNAFLDEFQFM.

C12 is covalently cross-linked (Glycyl cysteine thioester (Cys-Gly) (interchain with G-Cter in ubiquitin)). The interval 12–34 (CSEPNALGNFVQHFTNERSYHDK) is amphipathic helix 1 (AH1). The amphipathic helix 2 (AH2) stretch occupies residues 74–92 (HLMMDRHLNLRDGPREHKE). The amphipathic helix 4 (AH4) stretch occupies residues 261–288 (VEAAWDETARRTISDITRPITQINDPKL). A WxxxF/Y motif motif is present at residues 331-335 (WTEDY). TPR repeat units follow at residues 359 to 392 (DSDT…NPEN), 393 to 426 (AMAW…DPTN), 427 to 460 (SKAR…TPEY), 503 to 536 (PEVQ…SPTD), 538 to 570 (QLWN…KPSY), and 571 to 604 (VRAR…HPAP).

The protein belongs to the peroxisomal targeting signal receptor family. As to quaternary structure, interacts (via WxxxF/Y and LVxEF motifs) with PEX14; promoting translocation through the PEX13-PEX14 docking complex. Interacts with PEX7, promoting peroxisomal import of proteins containing a C-terminal PTS2-type peroxisomal targeting signal. In terms of processing, monoubiquitinated at Cys-12 by PEX2 during PEX5 passage through the retrotranslocation channel. Cys-12 monoubiquitination acts as a recognition signal for the PEX1-PEX6 complex and is required for PEX5 extraction and export from peroxisomes. When PEX5 recycling is compromised, polyubiquitinated by PEX10 during its passage through the retrotranslocation channel, leading to its degradation.

Its subcellular location is the cytoplasm. The protein resides in the cytosol. The protein localises to the peroxisome matrix. Receptor that mediates peroxisomal import of proteins containing a C-terminal PTS1-type tripeptide peroxisomal targeting signal (SKL-type). Binds to cargo proteins containing a PTS1 peroxisomal targeting signal in the cytosol, and translocates them into the peroxisome matrix by passing through the PEX13-PEX14 docking complex along with cargo proteins. PEX5 receptor is then retrotranslocated into the cytosol, leading to release of bound cargo in the peroxisome matrix, and reset for a subsequent peroxisome import cycle. Functionally, in addition to promoting peroxisomal translocation of proteins containing a PTS1 peroxisomal targeting signal, mediates peroxisomal import of proteins containing a C-terminal PTS2-type peroxisomal targeting signal via its interaction with PEX7. Interaction with PEX7 only takes place when PEX7 is associated with cargo proteins containing a PTS2 peroxisomal targeting signal. PEX7 along with PTS2-containing cargo proteins are then translocated through the PEX13-PEX14 docking complex together with PEX5. The polypeptide is Peroxisomal targeting signal 1 receptor (pex5) (Dictyostelium discoideum (Social amoeba)).